The chain runs to 341 residues: Methionine import ATP-binding protein MetN 1 (341 aa).

Residues 2–241 form the ABC transporter domain; the sequence is IEFRQVSKSF…PKTTIAQNFV (240 aa). 38–45 is an ATP binding site; that stretch reads GYSGAGKS.

This sequence belongs to the ABC transporter superfamily. Methionine importer (TC 3.A.1.24) family. The complex is composed of two ATP-binding proteins (MetN), two transmembrane proteins (MetI) and a solute-binding protein (MetQ).

Its subcellular location is the cell membrane. It carries out the reaction L-methionine(out) + ATP + H2O = L-methionine(in) + ADP + phosphate + H(+). The catalysed reaction is D-methionine(out) + ATP + H2O = D-methionine(in) + ADP + phosphate + H(+). Part of the ABC transporter complex MetNIQ involved in methionine import. Responsible for energy coupling to the transport system. The sequence is that of Methionine import ATP-binding protein MetN 1 from Staphylococcus aureus (strain Mu50 / ATCC 700699).